Reading from the N-terminus, the 225-residue chain is 2-C-methyl-D-erythritol 4-phosphate cytidylyltransferase (225 aa).

It belongs to the IspD/TarI cytidylyltransferase family. IspD subfamily.

The catalysed reaction is 2-C-methyl-D-erythritol 4-phosphate + CTP + H(+) = 4-CDP-2-C-methyl-D-erythritol + diphosphate. The protein operates within isoprenoid biosynthesis; isopentenyl diphosphate biosynthesis via DXP pathway; isopentenyl diphosphate from 1-deoxy-D-xylulose 5-phosphate: step 2/6. Catalyzes the formation of 4-diphosphocytidyl-2-C-methyl-D-erythritol from CTP and 2-C-methyl-D-erythritol 4-phosphate (MEP). This Cereibacter sphaeroides (strain ATCC 17029 / ATH 2.4.9) (Rhodobacter sphaeroides) protein is 2-C-methyl-D-erythritol 4-phosphate cytidylyltransferase.